We begin with the raw amino-acid sequence, 377 residues long: MNTIMAATGFLTGYIVPFILVLSLLVFVHEMGHYLVGRWCGIRSTAFSIGFGPELIGFTDKRGTRWKLSAIPLGGYVKFFGDEDAASKSDSSGLSHMSLEERAQTLSGAKLWKRAATVAAGPIANFILAILIFAVLFGIYGRMIADPVVAEVRENSAAATAGVKPGDRLVAIDGEKVMTFEDVRRYVGIRPGTPITVTVERAGEELKLPMVPTRTETTDQFGNKLEMGIIGIVTDQTSGNFRHIEYSPSEAVAEGVRETGHVITGTFNYIGNLVTGRMNADQLGGPVRVAQASGQMATLGISAVIQLAAVLSVSIGLLNLMPVPVLDGGHLVFYAIEAIRGRPLGAGAQEVAFRIGMMMILGLMVFATWNDISSLIG.

H29 is a binding site for Zn(2+). The active site involves E30. H33 is a Zn(2+) binding site. Helical transmembrane passes span 118-140 (VAAG…FGIY), 299-321 (LGIS…LNLM), and 351-373 (VAFR…NDIS). A PDZ domain is found at 129–202 (AILIFAVLFG…TPITVTVERA (74 aa)).

It belongs to the peptidase M50B family. The cofactor is Zn(2+).

It is found in the cell inner membrane. The sequence is that of Putative zinc metalloprotease Atu1380 from Agrobacterium fabrum (strain C58 / ATCC 33970) (Agrobacterium tumefaciens (strain C58)).